The primary structure comprises 171 residues: UPF0312 protein SAR2769 (171 aa).

This sequence belongs to the UPF0312 family.

In Staphylococcus aureus (strain MRSA252), this protein is UPF0312 protein SAR2769.